We begin with the raw amino-acid sequence, 946 residues long: Protein translocase subunit SecA (946 aa).

ATP contacts are provided by residues Gln-87, Gly-105–Thr-109, and Asp-524. Positions Ala-905–Arg-926 are disordered. Zn(2+) is bound by residues Cys-930, Cys-932, Cys-941, and His-942.

This sequence belongs to the SecA family. In terms of assembly, monomer and homodimer. Part of the essential Sec protein translocation apparatus which comprises SecA, SecYEG and auxiliary proteins SecDF-YajC and YidC. Zn(2+) is required as a cofactor.

It is found in the cell inner membrane. The protein resides in the cytoplasm. It carries out the reaction ATP + H2O + cellular proteinSide 1 = ADP + phosphate + cellular proteinSide 2.. Functionally, part of the Sec protein translocase complex. Interacts with the SecYEG preprotein conducting channel. Has a central role in coupling the hydrolysis of ATP to the transfer of proteins into and across the cell membrane, serving both as a receptor for the preprotein-SecB complex and as an ATP-driven molecular motor driving the stepwise translocation of polypeptide chains across the membrane. The protein is Protein translocase subunit SecA of Bradyrhizobium diazoefficiens (strain JCM 10833 / BCRC 13528 / IAM 13628 / NBRC 14792 / USDA 110).